The sequence spans 424 residues: Riboflavin biosynthesis protein RibBA (424 aa).

Residues 1 to 204 (MTRFDSIERA…IADLIAWRRK (204 aa)) are DHBP synthase. D-ribulose 5-phosphate contacts are provided by residues 28–29 (RE), Asp-33, 141–145 (RPGHT), and Glu-165. Glu-29 contacts Mg(2+). His-144 contacts Mg(2+). The segment at 205–424 (HEKHVLRIAE…QNTAQPGTAL (220 aa)) is GTP cyclohydrolase II. 259–263 (RVHSE) is a GTP binding site. Zn(2+) is bound by residues Cys-264, Cys-275, and Cys-277. GTP contacts are provided by residues Gln-280, 303 to 305 (EGR), and Thr-325. The active-site Proton acceptor; for GTP cyclohydrolase activity is the Asp-337. The active-site Nucleophile; for GTP cyclohydrolase activity is Arg-339. The GTP site is built by Thr-360 and Lys-365.

This sequence in the N-terminal section; belongs to the DHBP synthase family. It in the C-terminal section; belongs to the GTP cyclohydrolase II family. Mg(2+) serves as cofactor. Requires Mn(2+) as cofactor. It depends on Zn(2+) as a cofactor.

It carries out the reaction D-ribulose 5-phosphate = (2S)-2-hydroxy-3-oxobutyl phosphate + formate + H(+). The enzyme catalyses GTP + 4 H2O = 2,5-diamino-6-hydroxy-4-(5-phosphoribosylamino)-pyrimidine + formate + 2 phosphate + 3 H(+). It functions in the pathway cofactor biosynthesis; riboflavin biosynthesis; 2-hydroxy-3-oxobutyl phosphate from D-ribulose 5-phosphate: step 1/1. Its pathway is cofactor biosynthesis; riboflavin biosynthesis; 5-amino-6-(D-ribitylamino)uracil from GTP: step 1/4. Its function is as follows. Catalyzes the conversion of D-ribulose 5-phosphate to formate and 3,4-dihydroxy-2-butanone 4-phosphate. Functionally, catalyzes the conversion of GTP to 2,5-diamino-6-ribosylamino-4(3H)-pyrimidinone 5'-phosphate (DARP), formate and pyrophosphate. The protein is Riboflavin biosynthesis protein RibBA of Rhodococcus erythropolis (strain PR4 / NBRC 100887).